We begin with the raw amino-acid sequence, 541 residues long: Chaperonin GroEL 2 (541 aa).

Residues 30 to 33 (TLGP), Lys-51, 87 to 91 (DGTTT), Gly-415, and Asp-496 contribute to the ATP site.

It belongs to the chaperonin (HSP60) family. As to quaternary structure, forms a cylinder of 14 subunits composed of two heptameric rings stacked back-to-back. Interacts with the co-chaperonin GroES.

It localises to the cytoplasm. It carries out the reaction ATP + H2O + a folded polypeptide = ADP + phosphate + an unfolded polypeptide.. In terms of biological role, together with its co-chaperonin GroES, plays an essential role in assisting protein folding. The GroEL-GroES system forms a nano-cage that allows encapsulation of the non-native substrate proteins and provides a physical environment optimized to promote and accelerate protein folding. The protein is Chaperonin GroEL 2 of Bradyrhizobium sp. (strain BTAi1 / ATCC BAA-1182).